The primary structure comprises 330 residues: Methionyl-tRNA formyltransferase (330 aa).

A (6S)-5,6,7,8-tetrahydrofolate-binding site is contributed by 112–115 (SLLP).

This sequence belongs to the Fmt family.

The enzyme catalyses L-methionyl-tRNA(fMet) + (6R)-10-formyltetrahydrofolate = N-formyl-L-methionyl-tRNA(fMet) + (6S)-5,6,7,8-tetrahydrofolate + H(+). In terms of biological role, attaches a formyl group to the free amino group of methionyl-tRNA(fMet). The formyl group appears to play a dual role in the initiator identity of N-formylmethionyl-tRNA by promoting its recognition by IF2 and preventing the misappropriation of this tRNA by the elongation apparatus. This is Methionyl-tRNA formyltransferase from Synechocystis sp. (strain ATCC 27184 / PCC 6803 / Kazusa).